A 163-amino-acid polypeptide reads, in one-letter code: Protein YtsP (163 aa).

Belongs to the free Met sulfoxide reductase family.

In Bacillus subtilis (strain 168), this protein is Protein YtsP (ytsP).